The primary structure comprises 232 residues: uncharacterized protein (232 aa).

This is an uncharacterized protein from Escherichia coli (strain K12).